A 402-amino-acid polypeptide reads, in one-letter code: Olfactomedin-like protein 1 (402 aa).

The first 28 residues, Met1–Asp28, serve as a signal peptide directing secretion. Asn66 carries an N-linked (GlcNAc...) asparagine glycan. The stretch at Ser79–Ile133 forms a coiled coil. 2 N-linked (GlcNAc...) asparagine glycosylation sites follow: Asn138 and Asn183. Residues Ser140–Arg397 form the Olfactomedin-like domain. A disulfide bridge links Cys141 with Cys324.

Post-translationally, highly N-glycosylated. Mainly expressed in the small intestine, liver, lung and heart.

The protein localises to the secreted. The sequence is that of Olfactomedin-like protein 1 (OLFML1) from Homo sapiens (Human).